Reading from the N-terminus, the 612-residue chain is MPQLRSATSTTGRNMAGARALWRATGMGSEDFGKPIVAIANSFTQFVPGHVHLKNMGELVASAVQEAGGVAKEFNTIAVDDGIAMGHDGMLYSLPSRDIIADSVEYMVNAHCADALVCISNCDKITPGMLMAALRLNIPVVFVSGGPMESGEGVEGVVEHRVDLVDAMSLAVDESVTDAQLAQIEENACPTCGSCSGMFTANSMNCLTEALGLSLPGNGTTLATHVNRKRLFLEAGRRAVESAKKYYEQDDESVLPRSIATKAAFENAMALDIAMGGSTNTVLHILAAAQEAEVDFNLSDIDALSRQVPCLAKVAPNSTTFHIEHVHRAGGIPAILGELRRGGLLNEDVHTVHSQTMGEWLDEWDIRSGKASDAAKEFFLAAPGGVRTTQAFSQANEYEDHDVDAAGGCIRSVEHAYTKEGGLCVLFGNIAEDGAVIKTAGIDPELFHFTGRAFVVESQDEAVHEILSKNVKEGDIVVIAYEGPKGGPGMQEMLYPTSYLKGLGLGKKCALITDGRFSGGTSGLSIGHISPEAAAGGAVGLVQHGDEIEIDVENRVLRVNVDDAELARRRQEKGDAPWKPTKPRERRVSKALKAYASMVTSADKGAVRVVED.

D81 provides a ligand contact to Mg(2+). C122 contributes to the [2Fe-2S] cluster binding site. Mg(2+) is bound by residues D123 and K124. Position 124 is an N6-carboxylysine (K124). Residue C195 coordinates [2Fe-2S] cluster. E492 is a Mg(2+) binding site. S518 acts as the Proton acceptor in catalysis.

The protein belongs to the IlvD/Edd family. As to quaternary structure, homodimer. It depends on [2Fe-2S] cluster as a cofactor. The cofactor is Mg(2+).

The catalysed reaction is (2R)-2,3-dihydroxy-3-methylbutanoate = 3-methyl-2-oxobutanoate + H2O. It carries out the reaction (2R,3R)-2,3-dihydroxy-3-methylpentanoate = (S)-3-methyl-2-oxopentanoate + H2O. The protein operates within amino-acid biosynthesis; L-isoleucine biosynthesis; L-isoleucine from 2-oxobutanoate: step 3/4. Its pathway is amino-acid biosynthesis; L-valine biosynthesis; L-valine from pyruvate: step 3/4. Functionally, functions in the biosynthesis of branched-chain amino acids. Catalyzes the dehydration of (2R,3R)-2,3-dihydroxy-3-methylpentanoate (2,3-dihydroxy-3-methylvalerate) into 2-oxo-3-methylpentanoate (2-oxo-3-methylvalerate) and of (2R)-2,3-dihydroxy-3-methylbutanoate (2,3-dihydroxyisovalerate) into 2-oxo-3-methylbutanoate (2-oxoisovalerate), the penultimate precursor to L-isoleucine and L-valine, respectively. The protein is Dihydroxy-acid dehydratase of Kocuria rhizophila (strain ATCC 9341 / DSM 348 / NBRC 103217 / DC2201).